A 158-amino-acid chain; its full sequence is UPF0260 protein RL1394 (158 aa).

It belongs to the UPF0260 family.

This Rhizobium johnstonii (strain DSM 114642 / LMG 32736 / 3841) (Rhizobium leguminosarum bv. viciae) protein is UPF0260 protein RL1394.